Consider the following 956-residue polypeptide: UvrABC system protein A (956 aa).

33-40 is a binding site for ATP; sequence GLSGSGKS. The C4-type zinc-finger motif lies at 252–279; that stretch reads CPYCGFSVGELEPRMFSFNSPFGACPTC. 2 consecutive ABC transporter domains span residues 309 to 587 and 607 to 936; these read WRPI…KNSI and GNGL…KYLK. Residue 639–646 coordinates ATP; sequence GVSGSGKS. The C4-type zinc finger occupies 738–764; sequence CEACKGDGIIKIEMHFLPDVYVPCEVC.

The protein belongs to the ABC transporter superfamily. UvrA family. In terms of assembly, forms a heterotetramer with UvrB during the search for lesions.

The protein resides in the cytoplasm. Its function is as follows. The UvrABC repair system catalyzes the recognition and processing of DNA lesions. UvrA is an ATPase and a DNA-binding protein. A damage recognition complex composed of 2 UvrA and 2 UvrB subunits scans DNA for abnormalities. When the presence of a lesion has been verified by UvrB, the UvrA molecules dissociate. In Listeria innocua serovar 6a (strain ATCC BAA-680 / CLIP 11262), this protein is UvrABC system protein A.